A 130-amino-acid polypeptide reads, in one-letter code: Small ribosomal subunit protein uS9 (130 aa).

Belongs to the universal ribosomal protein uS9 family.

This Burkholderia pseudomallei (strain K96243) protein is Small ribosomal subunit protein uS9.